The following is a 402-amino-acid chain: MDNYDESRVFFREMCKNNGVDFPYRRGVIMSELHTPCCPVVCKLILPDPLTIDYISKIQQKPFLCIQFCSVLPCLPILEEFEHRSKNETLSRHFVDYEGAITLLTFDELFNKYSKIEDNHFVFHMDSNKYLLNEHTSKKIIDLINPSMAFIPTLSLKHSERKKWSTRKRTRFNDLYQSYYETLLKCSNKTKLVKPIHPCIEHKDMGDFEAIEFPGFGFGESLNERYELIKEMGANLIGKELRIIQLKTGTPLEILHAVLLGFDVVISPYPEILSLQGCALSFELPSEIEDNCEPEYVLNLLNEKCKFIDGVYKDQINDIVDLKNSVYISDVETPMDEKSIMKESRAYVNHLLNCKEMDGNIILSAHNLYMYEMLFQRIRDSIENNTLVSFVHNFVKCNLKED.

Belongs to the queuine tRNA-ribosyltransferase family.

The polypeptide is Queuine tRNA-ribosyltransferase-like protein (Theileria annulata).